A 198-amino-acid chain; its full sequence is NAD(P)H dehydrogenase (quinone) (198 aa).

The Flavodoxin-like domain occupies 6–190 (ILVLYYSRHG…LCRALGKRLA (185 aa)). FMN-binding positions include 12 to 17 (SRHGAT), 79 to 81 (TRF), 114 to 120 (STASLHG), and His-135.

Belongs to the WrbA family. As to quaternary structure, homodimer. FMN is required as a cofactor.

It carries out the reaction a quinone + NADH + H(+) = a quinol + NAD(+). It catalyses the reaction a quinone + NADPH + H(+) = a quinol + NADP(+). The sequence is that of NAD(P)H dehydrogenase (quinone) from Pseudomonas aeruginosa (strain ATCC 15692 / DSM 22644 / CIP 104116 / JCM 14847 / LMG 12228 / 1C / PRS 101 / PAO1).